A 32-amino-acid chain; its full sequence is Trypsin inhibitor 3 (32 aa).

3 cysteine pairs are disulfide-bonded: C6–C23, C13–C25, and C19–C31.

It belongs to the protease inhibitor I7 (squash-type serine protease inhibitor) family.

It is found in the secreted. Functionally, inhibits trypsin. The protein is Trypsin inhibitor 3 of Cucurbita pepo (Vegetable marrow).